The sequence spans 421 residues: ATP-dependent RNA helicase RhlB (421 aa).

The Q motif motif lies at 9 to 37; sequence QKFSDFALHPKVVEALEKKGFHNCTPIQA. The Helicase ATP-binding domain maps to 40 to 219; sequence LPLTLAGRDV…FEQMNNAEYI (180 aa). 53–60 contacts ATP; it reads AQTGTGKT. The short motif at 165-168 is the DEAD box element; it reads DEAD. Residues 245-390 form the Helicase C-terminal domain; it reads RLLQTLIEEE…VSKYNPDALM (146 aa). The tract at residues 395–421 is disordered; that stretch reads KPLRLTRARTGNGPRRTGAPRNRRRSG. Residues 402–414 show a composition bias toward low complexity; it reads ARTGNGPRRTGAP.

The protein belongs to the DEAD box helicase family. RhlB subfamily. Component of the RNA degradosome, which is a multiprotein complex involved in RNA processing and mRNA degradation.

Its subcellular location is the cytoplasm. The catalysed reaction is ATP + H2O = ADP + phosphate + H(+). DEAD-box RNA helicase involved in RNA degradation. Has RNA-dependent ATPase activity and unwinds double-stranded RNA. The polypeptide is ATP-dependent RNA helicase RhlB (Shigella flexneri serotype 5b (strain 8401)).